The primary structure comprises 416 residues: Lipid III flippase (416 aa).

Residues 1-17 lie on the Cytoplasmic side of the membrane; it reads MSLAKASLWTAASTLVK. The helical transmembrane segment at 18-38 threads the bilayer; the sequence is IGAGLLVGKLLAVSFGPAGLG. The Periplasmic segment spans residues 39 to 45; the sequence is LAANFRQ. A helical membrane pass occupies residues 46–66; that stretch reads LITVLGVLAGAGIFNGVTKYV. The Cytoplasmic segment spans residues 67–84; that stretch reads AQYHDNPQQLRRVVGTSS. A helical membrane pass occupies residues 85–105; it reads AMVLGFSTLMALVFVLAAAPI. Residues 106–121 lie on the Periplasmic side of the membrane; the sequence is SQGLFGNTDYQGLVRL. A helical membrane pass occupies residues 122 to 142; sequence VALVQMGIAWGNLLLALMKGF. Topologically, residues 143 to 144 are cytoplasmic; the sequence is RD. Residues 145-165 traverse the membrane as a helical segment; that stretch reads AAGNALSLIVGSLIGVLAYYV. The Periplasmic portion of the chain corresponds to 166 to 174; it reads SYRLGGYEG. Residues 175-195 traverse the membrane as a helical segment; the sequence is ALLGLALIPALVVIPAAIMLI. The Cytoplasmic portion of the chain corresponds to 196–216; it reads KRGVIPLSYLKPSWDNGLAGQ. The helical transmembrane segment at 217–237 threads the bilayer; sequence LSKFTLMALITSVTLPVAYIM. Topologically, residues 238 to 259 are periplasmic; sequence MRKLLAAQYSWDEVGIWQGVSS. Residues 260 to 280 traverse the membrane as a helical segment; sequence ISDAYLQFITASFSVYLLPTL. Residues 281 to 302 lie on the Cytoplasmic side of the membrane; that stretch reads SRLTEKRDITREVVKSLKFVLP. A helical membrane pass occupies residues 303–323; that stretch reads AVAAASFTVWLLRDFAIWLLL. At 324–334 the chain is on the periplasmic side; that stretch reads SNKFTAMRDLF. The helical transmembrane segment at 335–355 threads the bilayer; that stretch reads AWQLVGDVLKVGAYVFGYLVI. At 356 to 370 the chain is on the cytoplasmic side; it reads AKASLRFYILAEVSQ. The next 2 membrane-spanning stretches (helical) occupy residues 371-391 and 392-412; these read FTLL…LGAA and QAYM…FLLW. At 413–416 the chain is on the cytoplasmic side; the sequence is RRRA.

It belongs to the polysaccharide transport (PST) (TC 2.A.66.2) family. Probably part of a complex composed of WzxE, WzyE and WzzE.

The protein resides in the cell inner membrane. Its pathway is bacterial outer membrane biogenesis; enterobacterial common antigen biosynthesis. In terms of biological role, mediates the transbilayer movement of Und-PP-GlcNAc-ManNAcA-Fuc4NAc (lipid III) from the inner to the outer leaflet of the cytoplasmic membrane during the assembly of enterobacterial common antigen (ECA). Required for the assembly of the phosphoglyceride-linked form of ECA (ECA(PG)) and the water-soluble cyclic form of ECA (ECA(CYC)). Could also mediate the translocation of Und-PP-GlcNAc. The protein is Lipid III flippase of Escherichia coli (strain K12).